The following is a 236-amino-acid chain: 2,3,4,5-tetrahydropyridine-2,6-dicarboxylate N-acetyltransferase (236 aa).

This sequence belongs to the transferase hexapeptide repeat family. DapH subfamily.

The enzyme catalyses (S)-2,3,4,5-tetrahydrodipicolinate + acetyl-CoA + H2O = L-2-acetamido-6-oxoheptanedioate + CoA. It functions in the pathway amino-acid biosynthesis; L-lysine biosynthesis via DAP pathway; LL-2,6-diaminopimelate from (S)-tetrahydrodipicolinate (acetylase route): step 1/3. Functionally, catalyzes the transfer of an acetyl group from acetyl-CoA to tetrahydrodipicolinate. This Clostridium botulinum (strain ATCC 19397 / Type A) protein is 2,3,4,5-tetrahydropyridine-2,6-dicarboxylate N-acetyltransferase.